Reading from the N-terminus, the 518-residue chain is Motile sperm domain-containing protein 2 (518 aa).

The Cytoplasmic segment spans residues 1 to 496; that stretch reads MAENHAQNKA…QVQRCIWFQQ (496 aa). In terms of domain architecture, CRAL-TRIO spans 82-239; that stretch reads ESSIPRWLLE…HMGGTDPFKY (158 aa). A disordered region spans residues 252-308; it reads PLCENGPITSEDETSSKEDIESDGKETLETISNEEQTPLLKKINPTESTSKAEENEK. Over residues 265 to 279 the composition is skewed to basic and acidic residues; that stretch reads TSSKEDIESDGKETL. Residues 327–445 form the MSP domain; it reads LLHISPAEEL…MEHRLRCHTV (119 aa). The tract at residues 365–366 is required for FFAT motif binding and phosphorylated FFAT motif binding; that stretch reads RT. Residues 497-518 form a helical; Anchor for type IV membrane protein membrane-spanning segment; sequence LLLSLTMLLLAFVTSFFYLLYS.

In terms of assembly, homooligomer. Interacts (via MSP domain) with STARD3NL (via FFAT motif), RMDN3 (via FFAT motif), OSBPL1A (via FFAT motif) and CERT1 (via FFAT motif). Interacts (via MSP domain) with STARD3 (via phosphorylated FFAT motif); this interaction depends on the critical phosphorylation of STARD3 on 'Ser-209'. Interacts with RB1CC1 (via phosphorylated FFAT motif), MIGA2 (via phosphorylated FFAT motif) and OSBPL1A (via FFAT motif). As to expression, highly expressed in CD14(+) monocytes, and at lower levels in neutrophils. Does not show significant expression in B-cells or T-cells.

The protein localises to the endoplasmic reticulum membrane. Functionally, endoplasmic reticulum-anchored protein that mediates the formation of contact sites between the endoplasmic (ER) and endosomes, mitochondria or Golgi through interaction with conventional- and phosphorylated-FFAT-containing organelle-bound proteins. In addition, forms endoplasmic reticulum (ER)-lipid droplets (LDs) contacts through a direct protein-membrane interaction and participates in LDs homeostasis. The attachment mechanism involves an amphipathic helix that has an affinity for lipid packing defects present at the surface of LDs. Promotes migration of primary monocytes and neutrophils, in response to various chemokines. In Homo sapiens (Human), this protein is Motile sperm domain-containing protein 2.